The chain runs to 362 residues: Porin Omp2b (362 aa).

Residues 1 to 22 (MNIKSLLLGSAAALVAASGAQA) form the signal peptide.

It belongs to the alphaproteobacteria porin family. Homotrimer.

It localises to the cell outer membrane. Its function is as follows. Forms passive diffusion pores that allow small molecular weight hydrophilic materials across the outer membrane. The protein is Porin Omp2b (omp2b) of Brucella neotomae.